Reading from the N-terminus, the 80-residue chain is U-actitoxin-Avd3s (80 aa).

Residues 1-14 (FLLCFFLVADVSYG) form the signal peptide. Positions 19–69 (CLLPMDVGRCRARHPRYYYNSSSKRCEMFNYGGCRGNANNFITKKECEKVC) constitute a BPTI/Kunitz inhibitor domain. Intrachain disulfides connect C19–C69, C28–C52, and C44–C65. A propeptide spanning residues 74–80 (RDSPKEN) is cleaved from the precursor.

This sequence belongs to the venom Kunitz-type family. Sea anemone type 2 potassium channel toxin subfamily.

The protein resides in the secreted. It is found in the nematocyst. Functionally, serine protease inhibitor that inhibits both tissue and plasma kallikreins. Has hemolytic activity. Inhibits voltage-gated potassium channels (Kv). The chain is U-actitoxin-Avd3s from Anemonia viridis (Snakelocks anemone).